The sequence spans 60 residues: Large ribosomal subunit protein uL30 (60 aa).

This sequence belongs to the universal ribosomal protein uL30 family. In terms of assembly, part of the 50S ribosomal subunit.

This chain is Large ribosomal subunit protein uL30, found in Dechloromonas aromatica (strain RCB).